Consider the following 275-residue polypeptide: Hemin import ATP-binding protein HmuV (275 aa).

The 241-residue stretch at 2–242 (LKAAGIGVRL…EWIETGFGLQ (241 aa)) folds into the ABC transporter domain. Residue 34–41 (GPNGAGKS) coordinates ATP.

Belongs to the ABC transporter superfamily. Heme (hemin) importer (TC 3.A.1.14.5) family. As to quaternary structure, the complex is composed of two ATP-binding proteins (HmuV), two transmembrane proteins (HmuU) and a solute-binding protein (HmuT).

Its subcellular location is the cell inner membrane. Its function is as follows. Part of the ABC transporter complex HmuTUV involved in hemin import. Responsible for energy coupling to the transport system. The protein is Hemin import ATP-binding protein HmuV of Gloeobacter violaceus (strain ATCC 29082 / PCC 7421).